The primary structure comprises 64 residues: Small, acid-soluble spore protein beta (64 aa).

The protein belongs to the alpha/beta-type SASP family.

Its function is as follows. SASP are bound to spore DNA. They are double-stranded DNA-binding proteins that cause DNA to change to an a-like conformation. They protect the DNA backbone from chemical and enzymatic cleavage and are thus involved in dormant spore's high resistance to UV light. The protein is Small, acid-soluble spore protein beta of Paraclostridium bifermentans (Clostridium bifermentans).